Consider the following 353-residue polypeptide: Protein MGF 360-9L (353 aa).

This sequence belongs to the asfivirus MGF 360 family. As to quaternary structure, interacts with host STAT1; this interaction mediates STAT1 degradation through apoptosis. Interacts with host STAT2; this interaction mediates STAT2 degradation through the proteasome.

The protein localises to the host cytoplasm. In terms of biological role, plays a role in virus cell tropism, and may be required for efficient virus replication in macrophages. In addition, inhibits IFN-beta-induced IFN-stimulated genes (ISGs) transcription. Mechanistically, degrades host STAT1 and STAT2 through apoptosis and ubiquitin-proteasome pathways respectively. The protein is Protein MGF 360-9L of African swine fever virus (isolate Tick/Malawi/Lil 20-1/1983) (ASFV).